Consider the following 447-residue polypeptide: GTPase Der (447 aa).

EngA-type G domains are found at residues 4–165 and 180–357; these read QIIA…PKEK and VQIV…KNWN. GTP-binding positions include 10–17, 57–61, 119–122, 186–193, 233–237, and 298–301; these read GRPNVGKS, DTPGL, NKCE, GRPNAGKS, DTAGL, and NKWD. One can recognise a KH-like domain in the interval 358–443; that stretch reads KKITTSKLNE…PIRFAYVKTK (86 aa).

It belongs to the TRAFAC class TrmE-Era-EngA-EngB-Septin-like GTPase superfamily. EngA (Der) GTPase family. As to quaternary structure, associates with the 50S ribosomal subunit.

GTPase that plays an essential role in the late steps of ribosome biogenesis. This chain is GTPase Der, found in Rickettsia canadensis (strain McKiel).